The chain runs to 609 residues: MVELAAATCLHECGLPQAWCKQEAWRILETRFGQGLHFLTTWQAWRNDPQRPRMLHYVAVTAAPPDIDELLAGMASSPELLLLAKELAPQCLGLSTGFQRLTFDGGHVLLTLCVGDLTAMLRAQQFAADSIYLTPDPTDCPDRCAASNWRVWTAKALARCCRRGTTLVAPVDADHLYADLTQCGFELSTIQAGQPTGPEAAPTNISLRAQFNPRWTIKNTRNTLPARAMAVSSCAVIGAGLAGASVAASLARRGWQVQVLDQAHTPAAGASGLPVGLVVPHVSADDCVLSRLSRSGVRLMLQQARSLLRQGQDWDATGVLERRLDGPPGVPDIWHPQAAWLKPTQLVRAWLAQLGITFQGDAKVAALRQRGDEWELLDTDGGMLHRASRVVFANAGGAMALLDTLQARLPALNIRVNQFPVMQGVRGQVSWAMHTGLPDETFPPFPINGAGSIVPWVPVDEDCGQNLAWFVGASYQPDSQPPAPDEKNHATNLARLHKLSPKLGQALAGKFAAGAVNAWKNTRCVTADRLPAVGPLDQVDHPGLWMCAGMGSRGLSFSMLCAELLAARWSGEPLPIDAGLARTLEARRGADCHRNRLDRSPELPVSCAP.

The tract at residues 1-229 (MVELAAATCL…TRNTLPARAM (229 aa)) is tRNA (mnm(5)s(2)U34)-methyltransferase. An FAD-dependent cmnm(5)s(2)U34 oxidoreductase region spans residues 237 to 609 (IGAGLAGASV…SPELPVSCAP (373 aa)).

It in the N-terminal section; belongs to the methyltransferase superfamily. tRNA (mnm(5)s(2)U34)-methyltransferase family. This sequence in the C-terminal section; belongs to the DAO family. The cofactor is FAD.

The protein resides in the cytoplasm. It catalyses the reaction 5-aminomethyl-2-thiouridine(34) in tRNA + S-adenosyl-L-methionine = 5-methylaminomethyl-2-thiouridine(34) in tRNA + S-adenosyl-L-homocysteine + H(+). In terms of biological role, catalyzes the last two steps in the biosynthesis of 5-methylaminomethyl-2-thiouridine (mnm(5)s(2)U) at the wobble position (U34) in tRNA. Catalyzes the FAD-dependent demodification of cmnm(5)s(2)U34 to nm(5)s(2)U34, followed by the transfer of a methyl group from S-adenosyl-L-methionine to nm(5)s(2)U34, to form mnm(5)s(2)U34. This Albidiferax ferrireducens (strain ATCC BAA-621 / DSM 15236 / T118) (Rhodoferax ferrireducens) protein is tRNA 5-methylaminomethyl-2-thiouridine biosynthesis bifunctional protein MnmC (mnmC).